Consider the following 302-residue polypeptide: Cuticle collagen 40 (302 aa).

Disordered stretches follow at residues 79-103 (RIKR…GGGG) and 119-302 (AGAP…APGY). The segment covering 91-103 (YAEGGAAAGGGGG) has biased composition (gly residues). 5 triple-helical region regions span residues 114 to 143 (GAAG…AGSD), 162 to 185 (GPAG…DGNT), 189 to 221 (GGEG…PGQV), 226 to 252 (GTPG…AGAS), and 255 to 290 (GPAG…GGGC). The span at 137 to 154 (PGTAGSDAEAAAAPTASD) shows a compositional bias: low complexity. Pro residues predominate over residues 194–203 (AGPPGPPGPA). Low complexity-rich tracts occupy residues 205 to 234 (NPGT…AGAA) and 245 to 281 (NPGS…PGEA). Positions 293–302 (CPPPRTAPGY) are enriched in pro residues.

Belongs to the cuticular collagen family. Collagen polypeptide chains are complexed within the cuticle by disulfide bonds and other types of covalent cross-links.

Its function is as follows. Nematode cuticles are composed largely of collagen-like proteins. The cuticle functions both as an exoskeleton and as a barrier to protect the worm from its environment. The polypeptide is Cuticle collagen 40 (col-40) (Caenorhabditis elegans).